Consider the following 469-residue polypeptide: Glutamine synthetase (469 aa).

In terms of domain architecture, GS beta-grasp spans asparagine 14–threonine 98. In terms of domain architecture, GS catalytic spans proline 106–glycine 469. Residues glutamate 131 and glutamate 133 each coordinate Mg(2+). Residue glutamate 209 coordinates ATP. Residues glutamate 214 and glutamate 221 each coordinate Mg(2+). Residues asparagine 265–glycine 266 and glycine 266 each bind L-glutamate. A Mg(2+)-binding site is contributed by histidine 270. ATP-binding positions include histidine 272 to serine 274 and serine 274. Arginine 322, glutamate 328, and arginine 340 together coordinate L-glutamate. The ATP site is built by arginine 340, arginine 345, and lysine 353. Glutamate 358 contributes to the Mg(2+) binding site. Arginine 360 serves as a coordination point for L-glutamate. At tyrosine 398 the chain carries O-AMP-tyrosine.

This sequence belongs to the glutamine synthetase family. In terms of assembly, oligomer of 12 subunits arranged in the form of two hexameric ring. Mg(2+) is required as a cofactor.

It localises to the cytoplasm. The enzyme catalyses L-glutamate + NH4(+) + ATP = L-glutamine + ADP + phosphate + H(+). With respect to regulation, the activity of this enzyme could be controlled by adenylation under conditions of abundant glutamine. Catalyzes the ATP-dependent biosynthesis of glutamine from glutamate and ammonia. The sequence is that of Glutamine synthetase from Bradyrhizobium diazoefficiens (strain JCM 10833 / BCRC 13528 / IAM 13628 / NBRC 14792 / USDA 110).